A 335-amino-acid polypeptide reads, in one-letter code: Anthranilate phosphoribosyltransferase (335 aa).

Residues glycine 82, 85-86, threonine 90, 92-95, 110-118, and serine 122 each bind 5-phospho-alpha-D-ribose 1-diphosphate; these read GD, NIST, and KHGGRSVSS. Glycine 82 is an anthranilate binding site. Serine 94 is a Mg(2+) binding site. Arginine 168 is a binding site for anthranilate. Mg(2+) contacts are provided by aspartate 226 and glutamate 227.

The protein belongs to the anthranilate phosphoribosyltransferase family. Homodimer. It depends on Mg(2+) as a cofactor.

It carries out the reaction N-(5-phospho-beta-D-ribosyl)anthranilate + diphosphate = 5-phospho-alpha-D-ribose 1-diphosphate + anthranilate. It functions in the pathway amino-acid biosynthesis; L-tryptophan biosynthesis; L-tryptophan from chorismate: step 2/5. Catalyzes the transfer of the phosphoribosyl group of 5-phosphorylribose-1-pyrophosphate (PRPP) to anthranilate to yield N-(5'-phosphoribosyl)-anthranilate (PRA). In Francisella philomiragia subsp. philomiragia (strain ATCC 25017 / CCUG 19701 / FSC 153 / O#319-036), this protein is Anthranilate phosphoribosyltransferase.